The sequence spans 367 residues: Peptide chain release factor 2 (367 aa).

Position 251 is an N5-methylglutamine (glutamine 251).

This sequence belongs to the prokaryotic/mitochondrial release factor family. Post-translationally, methylated by PrmC. Methylation increases the termination efficiency of RF2.

It localises to the cytoplasm. Its function is as follows. Peptide chain release factor 2 directs the termination of translation in response to the peptide chain termination codons UGA and UAA. This chain is Peptide chain release factor 2, found in Nautilia profundicola (strain ATCC BAA-1463 / DSM 18972 / AmH).